We begin with the raw amino-acid sequence, 65 residues long: Large ribosomal subunit protein bL35 (65 aa).

A compositionally biased stretch (basic residues) spans 1-16; the sequence is MPKQKTHRASAKRFKR. The segment at 1–20 is disordered; it reads MPKQKTHRASAKRFKRTGSG.

Belongs to the bacterial ribosomal protein bL35 family.

The chain is Large ribosomal subunit protein bL35 from Streptococcus pyogenes serotype M1.